We begin with the raw amino-acid sequence, 63 residues long: Conotoxin Tx-D0111 (63 aa).

An N-terminal signal peptide occupies residues 1-19; that stretch reads MRCLPVFVILLLLIASTPS. Residues 20–47 constitute a propeptide that is removed on maturation; that stretch reads DTVPLKTKDDMPQASFHGNARRTLQMLS.

It belongs to the conotoxin T superfamily. Contains 2 disulfide bonds that can be either 'C1-C3, C2-C4' or 'C1-C4, C2-C3', since these disulfide connectivities have been observed for conotoxins with cysteine framework V (for examples, see AC P0DQQ7 and AC P81755). As to expression, expressed by the venom duct.

It localises to the secreted. The protein is Conotoxin Tx-D0111 of Conus textile (Cloth-of-gold cone).